An 845-amino-acid chain; its full sequence is Beta-glucosidase B (845 aa).

A glycan (N-linked (GlcNAc...) asparagine) is linked at Asn-202. The active site involves Asp-230. N-linked (GlcNAc...) asparagine glycosylation occurs at Asn-235. The PA14 domain maps to 406–557 (EGQPGWTLDF…HNRDLLSEAV (152 aa)). Asn-591, Asn-612, and Asn-794 each carry an N-linked (GlcNAc...) asparagine glycan.

This sequence belongs to the glycosyl hydrolase 3 family.

The catalysed reaction is Hydrolysis of terminal, non-reducing beta-D-glucosyl residues with release of beta-D-glucose.. It participates in glycan metabolism; cellulose degradation. Its function is as follows. Beta-glucosidases are one of a number of cellulolytic enzymes involved in the degradation of cellulosic biomass. Catalyzes the last step releasing glucose from the inhibitory cellobiose. The polypeptide is Beta-glucosidase B (bglB) (Emericella nidulans (strain FGSC A4 / ATCC 38163 / CBS 112.46 / NRRL 194 / M139) (Aspergillus nidulans)).